Here is a 333-residue protein sequence, read N- to C-terminus: Bifunctional phosphoglucose/phosphomannose isomerase (333 aa).

Residues Leu-22–Ala-160 form the SIS domain. D-fructose 6-phosphate-binding residues include Gly-39, Ser-40, Ser-84, Ser-86, Thr-89, and Arg-136. Catalysis depends on Glu-211, which acts as the Proton acceptor. Residues His-227 and Lys-322 each contribute to the D-fructose 6-phosphate site. Catalysis depends on His-227, which acts as the Proton donor. Residue Lys-322 is the Proton acceptor of the active site.

Belongs to the PGI/PMI family. Homodimer.

It catalyses the reaction alpha-D-glucose 6-phosphate = beta-D-fructose 6-phosphate. The enzyme catalyses D-mannose 6-phosphate = D-fructose 6-phosphate. With respect to regulation, inhibited by low concentrations of erythrose 4-phosphate and 6-phosphogluconate. Dual specificity isomerase that catalyzes the isomerization of both glucose-6-phosphate and mannose-6-phosphate to fructose-6-phosphate with similar catalytic efficiency. This chain is Bifunctional phosphoglucose/phosphomannose isomerase, found in Aeropyrum pernix (strain ATCC 700893 / DSM 11879 / JCM 9820 / NBRC 100138 / K1).